The sequence spans 640 residues: Serine/threonine-protein kinase WNG1 (640 aa).

Positions 1-70 are cleaved as a signal peptide; it reads MPEQDLASGF…GVLCTVEAGA (70 aa). Disordered regions lie at residues 100-222 and 237-280; these read PEVT…AQPT and SHPD…DASN. The span at 104-120 shows a compositional bias: polar residues; it reads HASSEGSPQFESSLSQQ. Basic and acidic residues predominate over residues 124-141; it reads RPADRGEAHNGEEPRKDA. The span at 175 to 186 shows a compositional bias: low complexity; it reads QRQASSAAESLA. The segment covering 248 to 279 has biased composition (basic and acidic residues); it reads FSKKQEGRRERRLAVRGDDSFARGHNRDRDAS. The region spanning 291-593 is the Protein kinase domain; it reads WAKIAALATG…LKQVMEDPYF (303 aa). Lys395 serves as a coordination point for ATP. The Proton acceptor role is filled by Asp486. Positions 609 to 640 are disordered; sequence PFRGDFSIDDPDAGGKMYIPPSKEQDHEQENE. A compositionally biased stretch (basic and acidic residues) spans 631–640; it reads KEQDHEQENE.

Belongs to the protein kinase superfamily. STE Ser/Thr protein kinase family. WNG subfamily. Requires Mg(2+) as cofactor.

It localises to the cytoplasmic granule. The protein localises to the secreted. Its subcellular location is the parasitophorous vacuole lumen. It catalyses the reaction L-seryl-[protein] + ATP = O-phospho-L-seryl-[protein] + ADP + H(+). The catalysed reaction is L-threonyl-[protein] + ATP = O-phospho-L-threonyl-[protein] + ADP + H(+). In terms of biological role, serine/threonine-protein kinase which, at the tachyzoite stage, phosphorylates several parasitophorous vacuole (PV)-resident proteins such as GRA2, GRA6 and GRA7. By phosphorylating GRA2 and GRA6, regulates the formation of a functional intravacuolar network (IVN); IVN is composed of membranous tubules that bud from the PV membrane into the vacuolar lumen. Plays a role in the establishement of chronic infection in the host by controlling cyst formation in the host tissues. In Toxoplasma gondii, this protein is Serine/threonine-protein kinase WNG1.